We begin with the raw amino-acid sequence, 347 residues long: NADH-ubiquinone oxidoreductase chain 2 (347 aa).

10 consecutive transmembrane segments (helical) span residues 3 to 23, 25 to 45, 59 to 79, 96 to 116, 148 to 170, 178 to 198, 200 to 220, 247 to 267, 276 to 296, and 326 to 346; these read PLILIMIMLTVILGTTIVMMS, HWLMIWMGFEMNMLAVIPLLM, YFLTQATASMLLMLAIIINLL, IIMTLAMAMKMGLAPLHFWVP, GINLDLILLMSMMSIAIGGWGGL, ILAYSSIAHMGWMASILAFNP, MTLLNLLLYILMTTTTFMLFM, IMLSLGGLPPLVGFLPKWMII, ITLATLMAITALLNLFFYMRL, and LPMLIILSTITLPLAPAITLL.

The protein belongs to the complex I subunit 2 family. Core subunit of respiratory chain NADH dehydrogenase (Complex I) which is composed of 45 different subunits. Interacts with TMEM242.

The protein resides in the mitochondrion inner membrane. The enzyme catalyses a ubiquinone + NADH + 5 H(+)(in) = a ubiquinol + NAD(+) + 4 H(+)(out). Functionally, core subunit of the mitochondrial membrane respiratory chain NADH dehydrogenase (Complex I) which catalyzes electron transfer from NADH through the respiratory chain, using ubiquinone as an electron acceptor. Essential for the catalytic activity and assembly of complex I. The sequence is that of NADH-ubiquinone oxidoreductase chain 2 from Saccopteryx leptura (Lesser sac-winged bat).